We begin with the raw amino-acid sequence, 2667 residues long: MNEENPSSSIILDDQQQQDSFYSEIKELEKSIQSNKLSERKNTLTRINSIGKHELSTQENDATTTTTTTTVDLEEKLKVLIYLYFTSYSIGPDSQWIFSLVQSLKQLFKDISSATNTSLVTDELKINIVKFTLREIGRLAKLLPTNKRSKYVPQNTLMSFSLVLLNYFIDQIQSNSDLTTLLFAAQELLYRELTLQHMKNNQPIFNQILNKNKILTFYQNIVTKDSSNKSFFIVYFLLRNFTDQSNKQKEQDNTFKINDLLNIYNKTVIGSSQQKIEEHKFFKRLFNQLTNEDLQSIILPPLSRHIKRDQDQVFKILIFILENLSSDFNVIDLSSLLKSMLLPMLLPVIQSTISIEENRKLLKKTFTLIIERSKDTKLISSMITDDLLKTLSVAGNPSQKLIIISIISSIISTKNFIERLSLTTEKLQLSKQILQSISIYLEKELNKDNRNKGFKLLGKVMKMVEELPEQTIKIITNSLKNDDDIIKGQVILSLSKSLGPEANGTNKKVIQIINGFTETINTILKNVKNAKTCDPSTTTASLHYMLSLITTTGVPKNDIFTKYSTDKTTISNLYASTSFLHTDGFIQRTSKKDHAIDLLLTLFLRVKSFPSIKLNDKSPLYSSVLNCLLHSQWSVSKHSAIKIRSILSRNDSVDIDYPLLSNQLLIEFSTILFDDSLIITPQIINSNVESTTTTTTTISNKKNYLIAFRSILSKNIKSELYPMLSLICYHPFINYNWKRVSSLIQNDVNTTLSSNAIEISKYIFEKGLNQKKNKSYQQAFQQAINGLMNYNVPLLNEELVKLMVKALSYEPVLAITQQQWSIYHTLPTELFVEKQEQLVESRNDRKVKPKTAEEQRDEESRKRIEEKKKIQSGELEKQEKERQKQLAAQAVIRKDVQDVIDRLHLAMDTCQTMAKSSSNPQFVGEFMSPIIVALLQLMKHEITNHQFTQVFEKLICCVPSRFKLDRSFARHYIYIINNIYYRPTLSEIQILGFIQKILTHIRESIAKEALSGFAFNYFWPIIKNGLETTISFTIQEISMEIIQKHTAQGQAYPRGSMISSLIIVVSTNSRLEAQARNTIFQLIEGVETSDIGELMEGIISKHVQVRSICLQAIEKIPSIYSPSFVWEDKYIGSLWFARFDNHDANTSALAEKIWLATNQPTQLPEDFMKLLSDSTFNVNSETRKINALAIKEAATCHTHMIPEIVDNLFEIYEQNYPDEIRETPITSKFRISVATALSGLGNAIVEPEVLKSLFTKIIERGLFDPKEEVVQEFVSTGMSIINQQGVQFSGELLATFEAFLARPDNGTGEEDSIRANVVVYMGALAKHMDASNPKVSIVIDKLVDALSIPSESVQVGISKCIAQLIPSFKKQGDRLIPMLLEKLKNSSGNYADRRGAAFGLAGSVKGLGIGSLKNYSILDTLQSYIEDKKHPTSRQGALFAFECLCNTIGRVFEPYIIHILPKLLVCFGDNVSEVRDATADTAKAIMSQLSGHGVKIVLPALLKALDDRSWRTKEGSIELLGAMAFCAPKQLSSCLPTIVPKLTYVLNDTHTKVQEAAKEALSHIGSVIRNPEIQIHVPLLLQTYDDPEIHSKELLENLLSTNYVHTIDPASLSLLLPILERTLKERSSELKKMSCQIVGNLCSLTEPKDLVPYLNILMPVMKTVLLDPIPEVRAICARALGLLVRGMGEENFSTLIPWLLETVKSDQGAVERSGAAQGLSEVLASLDISRFNSLINELLAMTNSPRPHVREGILSIFIFTPISLGDLFLPYLPKVLPQVLKGLADDSDPVREVCMRCGQSIVLQFAVTGIEVIVPALEKVLFHENWRIRLSCVQLFGDLLFKLAGTTAQEVQSNNSSYNAKDDDDDEPGSSGNDIQKILGKERLGRILSSLYMMRFDNNSSVRQKVLLIWKYIVSNTPKTLREILPTLIEMIISSIGSNNVEKRQISAKTLGDIVSKLSDRILPEILPILERGLRSELEETRQGVCIGLSEVISSAKTQLLPYLSSVVTCITKALCDPLIDVREAAAKAFDHLYHTFGSKASNEILPQLIQLLDNSNNKDLAGYALDGLRQVILVRSSIVLPVLIPKLLSRPISTSNVTALSSLAADAGEGLYVHLSTIIPSLIESFTNPNTISNAKEIKEAAVSICKSIDEQGWDTLIGLLIEQTEIRLPNIRLGACELIGEFYNGNTMVTEYPEELLLSLLSLFNDPDALVQQAANNALGFITKSLKKDNLTYLPVFQKGIQLLVNETYEEVSTIPGFCLPKGLASVLPVLISGLMYGTSDQREQATNTLRTVINHTSADALKPFVMQITGPLILVIGDKFPWQVKSAILQTLSLLISKSPASMKIFLHQLQPTFIKCLSDSHKNVRTNAASALGLLMTLSSSVDQLVNSLITGISTADSISQESKLRALQSIFEKKPKVEQATLDKAIATIVDFLYQPSDDLRSMVAQTIGASSKCFTSLTELNQFIKTNLISPSQSVLSRYGKSLALGEIFKASGKNLIDSQSPNMPTIIKIIQTDCRDEKGPIRESSAYLAEAILVASPLTYAKDLVPSICHLIGDQSSSVSISALNVIKRFCKSNQQLSRQYLRDIVVPTMNRLKERTNLPLKLAAERTLVHSLQIFKESIVMDDLIKQLELSGDSSMANSLIDYHKRVLMKLSPDSDIEK.

8 HEAT repeats span residues 19 to 56 (DSFY…HELS), 95 to 132 (QWIF…VKFT), 159 to 198 (SFSL…LQHM), 293 to 330 (DLQS…DFNV), 336 to 375 (LLKS…RSKD), 398 to 439 (SQKL…SISI), 466 to 503 (ELPE…PEAN), and 794 to 832 (LLNE…ELFV). A disordered region spans residues 842-879 (RNDRKVKPKTAEEQRDEESRKRIEEKKKIQSGELEKQE). HEAT repeat units follow at residues 929–967 (PIIV…LDRS), 985–1024 (LSEI…IIKN), 1085–1122 (GVET…IYSP), 1199–1237 (HMIP…ATAL), 1290–1330 (GELL…HMDA), 1333–1370 (PKVS…SFKK), 1371–1407 (QGDR…VKGL), 1412–1450 (LKNY…TIGR), 1454–1491 (PYII…QLSG), 1492–1529 (HGVK…CAPK), 1533–1570 (SCLP…VIRN), 1572–1608 (EIQI…HTID), 1610–1647 (ASLS…LTEP), 1652–1689 (PYLN…GMGE), 1691–1728 (NFST…SLDI), 1729–1766 (SRFN…SLGD), 1770–1807 (PYLP…QFAV), and 1809–1845 (GIEV…KLAG). Residues 1853–1875 (SNNSSYNAKDDDDDEPGSSGNDI) are disordered. HEAT repeat units lie at residues 1882–1919 (ERLG…NTPK), 1923–1960 (EILP…KLSD), 1962–1998 (ILPE…SAKT), 2002–2039 (PYLS…TFGS), 2040–2078 (KASN…VRSS), 2080–2110 (VLPV…DAGE), 2114–2152 (VHLS…SIDE), 2154–2190 (GWDT…GNTM), 2193–2230 (EYPE…SLKK), and 2264–2301 (KGLA…HTSA). Positions 2265–2412 (GLASVLPVLI…ISQESKLRAL (148 aa)) are RWDBD region. An HEAT 37; degenerate repeat occupies 2326 to 2348 (QVKSAILQTLSLLISKSPASMKI). One copy of the HEAT 38; degenerate repeat lies at 2349 to 2385 (FLHQLQPTFIKCLSDSHKNVRTNAASALGLLMTLSSS). HEAT repeat units lie at residues 2387–2421 (DQLV…KKPK), 2425–2462 (ATLD…CFTS), 2508–2545 (PNMP…ASPL), and 2546–2583 (TYAK…SNQQ).

This sequence belongs to the GCN1 family. As to quaternary structure, interacts with eif2ak4/gcn2; this interaction stimulates the eif2ak4/gcn2 kinase activity and is impaired by impact upon a variety of stress conditions, such as amino acid depletion, UV-C irradiation, proteasome inhibitor treatment and glucose deprivation. Interacts with impact; this prevents the interaction of gcn1 with eif2ak4/gcn2 and inhibits eif2ak4/gcn2 kinase activity.

It is found in the cytoplasm. In terms of biological role, ribosome collision sensor that activates a translation quality control pathway when a ribosome has stalled during translation. Directly binds to the ribosome and acts as a sentinel for colliding ribosomes. Gcn1 also acts as a positive activator of the integrated stress response (ISR) by mediating activation of eif2ak4/gcn2 in response to amino acid starvation. Interaction with eif2ak4/gcn2 on translating ribosomes stimulates eif2ak4/gcn2 kinase activity, leading to phosphorylation of eukaryotic translation initiation factor 2 (eIF-2-alpha/eif2s1). EIF2S1/eIF-2-alpha phosphorylation converts EIF2S1/eIF-2-alpha into a global protein synthesis inhibitor, leading to a global attenuation of cap-dependent translation, and thus to a reduced overall utilization of amino acids, while concomitantly initiating the preferential translation of ISR-specific mRNAs, such as the transcriptional activator atf4, and hence allowing atf4-mediated reprogramming of amino acid biosynthetic gene expression to alleviate nutrient depletion. The protein is eIF-2-alpha kinase activator GCN1 of Dictyostelium discoideum (Social amoeba).